A 350-amino-acid polypeptide reads, in one-letter code: tRNA uridine(34) hydroxylase (350 aa).

Positions 146-240 (DDPDTLFVDM…YARKAKEQGL (95 aa)) constitute a Rhodanese domain. The active-site Cysteine persulfide intermediate is cysteine 200.

The protein belongs to the TrhO family.

The catalysed reaction is uridine(34) in tRNA + AH2 + O2 = 5-hydroxyuridine(34) in tRNA + A + H2O. Its function is as follows. Catalyzes oxygen-dependent 5-hydroxyuridine (ho5U) modification at position 34 in tRNAs. This chain is tRNA uridine(34) hydroxylase, found in Yersinia enterocolitica serotype O:8 / biotype 1B (strain NCTC 13174 / 8081).